Consider the following 454-residue polypeptide: Glutamine synthetase (454 aa).

In terms of domain architecture, GS beta-grasp spans 19 to 111 (NNVKFIRFQF…VICDVYKDEK (93 aa)). In terms of domain architecture, GS catalytic spans 118–454 (PRSRLKAILE…DWETGKYLIY (337 aa)). Residues Glu142 and Glu144 each contribute to the Mg(2+) site. Glu194 lines the ATP pocket. Mg(2+) contacts are provided by Glu199 and Glu206. L-glutamate contacts are provided by residues 250 to 251 (NG) and Gly251. His255 is a binding site for Mg(2+). ATP is bound by residues 257–259 (HQS) and Ser259. L-glutamate-binding residues include Arg309, Glu315, and Arg327. ATP is bound by residues Arg327, Arg332, and Lys339. Glu344 serves as a coordination point for Mg(2+). Residue Arg346 participates in L-glutamate binding.

It belongs to the glutamine synthetase family. As to quaternary structure, oligomer of 12 subunits arranged in the form of two hexagons. It depends on Mg(2+) as a cofactor.

It localises to the cytoplasm. It carries out the reaction L-glutamate + NH4(+) + ATP = L-glutamine + ADP + phosphate + H(+). With respect to regulation, feedback inhibited by glycine and alanine, and inhibited by low concentrations of methionine sulfoximine. Its function is as follows. Probably involved in nitrogen metabolism via ammonium assimilation. Catalyzes the ATP-dependent biosynthesis of glutamine from glutamate and ammonia. Beta-glutamate is a much poorer substrate than alpha-glutamate. The protein is Glutamine synthetase of Methanocaldococcus jannaschii (strain ATCC 43067 / DSM 2661 / JAL-1 / JCM 10045 / NBRC 100440) (Methanococcus jannaschii).